The following is a 76-amino-acid chain: Anaredoxin (76 aa).

The HNH domain occupies 24–66; sequence CMVCWEVNSKANGHHLIPYSEGGSADIQNMMTLCPSCHTKYHK.

Belongs to the HNH nuclease family.

Its function is as follows. Putative P-450 reductase. This Nostoc sp. (strain PCC 7120 / SAG 25.82 / UTEX 2576) protein is Anaredoxin.